Here is a 301-residue protein sequence, read N- to C-terminus: Quinolinate synthase (301 aa).

2 residues coordinate iminosuccinate: His21 and Ser38. Residue Cys83 participates in [4Fe-4S] cluster binding. Residues 109-111 and Ser126 each bind iminosuccinate; that span reads YIN. Cys169 serves as a coordination point for [4Fe-4S] cluster. Iminosuccinate is bound by residues 195–197 and Thr212; that span reads HPE. A [4Fe-4S] cluster-binding site is contributed by Cys257.

The protein belongs to the quinolinate synthase family. Type 2 subfamily. Requires [4Fe-4S] cluster as cofactor.

It localises to the cytoplasm. The catalysed reaction is iminosuccinate + dihydroxyacetone phosphate = quinolinate + phosphate + 2 H2O + H(+). The protein operates within cofactor biosynthesis; NAD(+) biosynthesis; quinolinate from iminoaspartate: step 1/1. Catalyzes the condensation of iminoaspartate with dihydroxyacetone phosphate to form quinolinate. The protein is Quinolinate synthase of Clostridium perfringens (strain ATCC 13124 / DSM 756 / JCM 1290 / NCIMB 6125 / NCTC 8237 / Type A).